The following is a 292-amino-acid chain: Probable starch degradation products transport system permease protein AmyD (292 aa).

The next 6 membrane-spanning stretches (helical) occupy residues 15–35, 77–97, 110–130, 156–176, 205–225, and 260–280; these read WLFIAPTLLSLIIVVLIPFII, FAVACIVIINVVGLSLAMLVT, FYLPNLIGGLILGFIWNFIFV, FWGLVIVTSWQMIGYVMVIYI, VFPLIAPAFTVSLFITLSNSF, and MAVGQAKAVIMFLIIAVISVI. One can recognise an ABC transmembrane type-1 domain in the interval 71–281; it reads IIFTAKFAVA…LIIAVISVIQ (211 aa).

It belongs to the binding-protein-dependent transport system permease family. MalFG subfamily.

It localises to the cell membrane. Its function is as follows. Probably part of a binding-protein-dependent transport system starch degradation products. Probably responsible for the translocation of the substrate across the membrane. This chain is Probable starch degradation products transport system permease protein AmyD (amyD), found in Thermoanaerobacterium thermosulfurigenes (Clostridium thermosulfurogenes).